Here is a 189-residue protein sequence, read N- to C-terminus: GTPase HRas (189 aa).

Residue M1 is modified to N-acetylmethionine; in GTPase HRas; alternate. At T2 the chain carries N-acetylthreonine; in GTPase HRas, N-terminally processed. Residues 13 to 18, 29 to 35, 59 to 60, 116 to 119, and 145 to 147 contribute to the GTP site; these read GVGKSA, VDEYDPT, AG, NKCD, and SAK. Residues 32-40 carry the Effector region motif; sequence YDPTIEDSY. T35 is a glycosylation site ((Microbial infection) O-linked (Glc) threonine; by P.sordellii toxin TcsL). At C118 the chain carries S-nitrosocysteine. The tract at residues 166-185 is hypervariable region; it reads HKLRKLNPPDESGPGCMSCK. A Glycyl lysine isopeptide (Lys-Gly) (interchain with G-Cter in ubiquitin) cross-link involves residue K170. C181 carries the S-palmitoyl cysteine lipid modification. A lipid anchor (S-(15-deoxy-Delta12,14-prostaglandin J2-9-yl)cysteine; alternate) is attached at C184. C184 carries the S-palmitoyl cysteine; alternate lipid modification. C186 is subject to Cysteine methyl ester. Residue C186 is the site of S-farnesyl cysteine attachment. Residues 187 to 189 constitute a propeptide, removed in mature form; that stretch reads VLS.

This sequence belongs to the small GTPase superfamily. Ras family. In terms of assembly, in its GTP-bound form interacts with PLCE1. Interacts with TBC1D10C. Interacts with RGL3. Interacts with HSPD1. Found in a complex with at least BRAF, HRAS, MAP2K1, MAPK3 and RGS14. Interacts (active GTP-bound form) with RGS14 (via RBD 1 domain). Forms a signaling complex with RASGRP1 and DGKZ. Interacts with RASSF5. Interacts with PDE6D. Interacts with IKZF3. Interacts with RACK1. Interacts with PIK3CG; the interaction is required for membrane recruitment and beta-gamma G protein dimer-dependent activation of the PI3K gamma complex PIK3CG:PIK3R6. Interacts with RAPGEF2. Interacts (active GTP-bound form) with both SHOC2 and PP1c (all isoforms) to form a tertiary complex; SHOC2 and PP1c preferably bind M-Ras/MRAS, but they also bind K-Ras/KRAS, N-Ras/NRAS and H-Ras/HRAS. Interacts (GTP-bound form) with MAPKAP1/SIN1; inhibiting H-Ras/HRAS activity. In terms of processing, palmitoylated by the ZDHHC9-GOLGA7 complex. A continuous cycle of de- and re-palmitoylation regulates rapid exchange between plasma membrane and Golgi. S-nitrosylated; critical for redox regulation. Important for stimulating guanine nucleotide exchange. No structural perturbation on nitrosylation. Post-translationally, the covalent modification of cysteine by 15-deoxy-Delta12,14-prostaglandin-J2 is autocatalytic and reversible. It may occur as an alternative to other cysteine modifications, such as S-nitrosylation and S-palmitoylation. In terms of processing, acetylation at Lys-104 prevents interaction with guanine nucleotide exchange factors (GEFs). Fatty-acylated at Lys-170. Post-translationally, ubiquitinated by the BCR(LZTR1) E3 ubiquitin ligase complex at Lys-170 in a non-degradative manner, leading to inhibit Ras signaling by decreasing Ras association with membranes. In terms of processing, (Microbial infection) Glucosylated at Thr-35 by P.sordellii toxin TcsL. Monoglucosylation completely prevents the recognition of the downstream effector, blocking the GTPases in their inactive form, leading to inhibit Ras signaling. As to expression, widely expressed.

The protein resides in the cell membrane. Its subcellular location is the golgi apparatus. The protein localises to the golgi apparatus membrane. It is found in the nucleus. It localises to the cytoplasm. The protein resides in the perinuclear region. The enzyme catalyses GTP + H2O = GDP + phosphate + H(+). Its activity is regulated as follows. Alternates between an inactive form bound to GDP and an active form bound to GTP. Activated by a guanine nucleotide-exchange factor (GEF) and inactivated by a GTPase-activating protein (GAP). Its function is as follows. Involved in the activation of Ras protein signal transduction. Ras proteins bind GDP/GTP and possess intrinsic GTPase activity. This chain is GTPase HRas (HRAS), found in Homo sapiens (Human).